Consider the following 784-residue polypeptide: Toll-like receptor 2 (784 aa).

The signal sequence occupies residues 1 to 20 (MPHTLWMVWVLGVIISLSKE). At 21–588 (ESSNQASLSC…RLSVSECHRT (568 aa)) the chain is on the extracellular side. Residues cysteine 30 and cysteine 36 are joined by a disulfide bond. 19 LRR repeats span residues 54–77 (VKSLDLSNNRITYISNSDLQRCVN), 78–101 (LQALVLTSNGINTIEEDSFSSLGS), 102–125 (LEHLDLSYNYLSNLSSSWFKPLSS), 126–150 (LTFLNLLGNPYKTLGETSLFSHLTK), 151–175 (LQILRVGNMDTFTKIQRKDFAGLTF), 176–199 (LEELEIDASDLQSYEPKSLKSIQN), 200–223 (VSHLILHMKQHILLLEIFVDVTSS), 224–250 (VECLELRDTDLDTFHFSELSTGETNSL), 251–278 (IKKFTFRNVKITDESLFQVMKLLNQISG), 279–308 (LLELEFDDCTLNGVGNFRASDNDRVIDPGK), 309–337 (VETLTIRRLHIPRFYLFYDLSTLYSLTER), 338–361 (VKRITVENSKVFLVPCLLSQHLKS), 362–388 (LEYLDLSENLMVEEYLKNSACEDAWPS), 389–414 (LQTLILRQNHLASLEKTGETLLTLKN), 415–437 (LTNIDISKNSFHSMPETCQWPEK), 438–457 (MKYLNLSSTRIHSVTGCIPK), 458–478 (TLEILDVSNNNLNLFSLNLPQ), 479–500 (LKELYISRNKLMTLPDASLLPM), and 501–524 (LLVLKISRNAITTFSKEQLDSFHT). An N-linked (GlcNAc...) asparagine glycan is attached at asparagine 114. Asparagine 199 carries N-linked (GlcNAc...) asparagine glycosylation. Cysteines 353 and 382 form a disulfide. Asparagine 414 carries an N-linked (GlcNAc...) asparagine glycan. The cysteines at positions 432 and 454 are disulfide-linked. An N-linked (GlcNAc...) asparagine glycan is attached at asparagine 442. In terms of domain architecture, LRRCT spans 525 to 579 (LKTLEAGGNNFICSCEFLSFTQEQQALAKVLIDWPANYLCDSPSHVRGQQVQDVR). Residues 589 to 609 (ALVSGMCCALFLLILLTGVLC) form a helical membrane-spanning segment. The Cytoplasmic portion of the chain corresponds to 610–784 (HRFHGLWYMK…WVNLRAAIKS (175 aa)). The TIR domain maps to 639–782 (ICYDAFVSYS…GFWVNLRAAI (144 aa)). Lysine 754 participates in a covalent cross-link: Glycyl lysine isopeptide (Lys-Gly) (interchain with G-Cter in ubiquitin). The ATG16L1-binding motif motif lies at 761–778 (YLEWPMDEAQREGFWVNL).

Belongs to the Toll-like receptor family. Interacts with LY96, TLR1 and TLR6 (via extracellular domain). TLR2 seems to exist in heterodimers with either TLR1 or TLR6 before stimulation by the ligand. The heterodimers form bigger oligomers in response to their corresponding ligands as well as further heterotypic associations with other receptors such as CD14 and/or CD36. Binds MYD88 (via TIR domain). Interacts with TICAM1. Interacts with CNPY3. Interacts with ATG16L1. Interacts with PPP1R11. Interacts with TICAM2. Interacts with TIRAP. In terms of assembly, (Microbial infection) Interacts with M.tuberculosis EsxA. As to quaternary structure, (Microbial infection) Interacts with M.bovis MPB83. (Microbial infection) Interacts with Staphylococcus aureus protein SSL5. In terms of processing, glycosylation of Asn-442 is critical for secretion of the N-terminal ectodomain of TLR2. Ubiquitinated at Lys-754 by PPP1R11, leading to its degradation. Deubiquitinated by USP2. In terms of tissue distribution, highly expressed in peripheral blood leukocytes, in particular in monocytes, in bone marrow, lymph node and in spleen. Also detected in lung and in fetal liver. Levels are low in other tissues.

It localises to the membrane. The protein localises to the cytoplasmic vesicle. It is found in the phagosome membrane. Its subcellular location is the membrane raft. Its function is as follows. Cooperates with LY96 to mediate the innate immune response to bacterial lipoproteins and other microbial cell wall components. Cooperates with TLR1 or TLR6 to mediate the innate immune response to bacterial lipoproteins or lipopeptides. Acts via MYD88 and TRAF6, leading to NF-kappa-B activation, cytokine secretion and the inflammatory response. May also activate immune cells and promote apoptosis in response to the lipid moiety of lipoproteins. Recognizes mycoplasmal macrophage-activating lipopeptide-2kD (MALP-2), soluble tuberculosis factor (STF), phenol-soluble modulin (PSM) and B.burgdorferi outer surface protein A lipoprotein (OspA-L) cooperatively with TLR6. Stimulation of monocytes in vitro with M.tuberculosis PstS1 induces p38 MAPK and ERK1/2 activation primarily via this receptor, but also partially via TLR4. MAPK activation in response to bacterial peptidoglycan also occurs via this receptor. Acts as a receptor for M.tuberculosis lipoproteins LprA, LprG, LpqH and PstS1, some lipoproteins are dependent on other coreceptors (TLR1, CD14 and/or CD36); the lipoproteins act as agonists to modulate antigen presenting cell functions in response to the pathogen. M.tuberculosis HSP70 (dnaK) but not HSP65 (groEL-2) acts via this protein to stimulate NF-kappa-B expression. Recognizes M.tuberculosis major T-antigen EsxA (ESAT-6) which inhibits downstream MYD88-dependent signaling (shown in mouse). Forms activation clusters composed of several receptors depending on the ligand, these clusters trigger signaling from the cell surface and subsequently are targeted to the Golgi in a lipid-raft dependent pathway. Forms the cluster TLR2:TLR6:CD14:CD36 in response to diacylated lipopeptides and TLR2:TLR1:CD14 in response to triacylated lipopeptides. Required for normal uptake of M.tuberculosis, a process that is inhibited by M.tuberculosis LppM. The protein is Toll-like receptor 2 of Homo sapiens (Human).